Consider the following 196-residue polypeptide: ATP-dependent Clp protease proteolytic subunit (196 aa).

Ser98 serves as the catalytic Nucleophile. Residue His123 is part of the active site.

It belongs to the peptidase S14 family. Fourteen ClpP subunits assemble into 2 heptameric rings which stack back to back to give a disk-like structure with a central cavity, resembling the structure of eukaryotic proteasomes.

The protein localises to the cytoplasm. The catalysed reaction is Hydrolysis of proteins to small peptides in the presence of ATP and magnesium. alpha-casein is the usual test substrate. In the absence of ATP, only oligopeptides shorter than five residues are hydrolyzed (such as succinyl-Leu-Tyr-|-NHMec, and Leu-Tyr-Leu-|-Tyr-Trp, in which cleavage of the -Tyr-|-Leu- and -Tyr-|-Trp bonds also occurs).. Functionally, cleaves peptides in various proteins in a process that requires ATP hydrolysis. Has a chymotrypsin-like activity. Plays a major role in the degradation of misfolded proteins. The sequence is that of ATP-dependent Clp protease proteolytic subunit from Lactiplantibacillus plantarum (strain ATCC BAA-793 / NCIMB 8826 / WCFS1) (Lactobacillus plantarum).